We begin with the raw amino-acid sequence, 418 residues long: Deoxyribonuclease Tat-D (418 aa).

The a divalent metal cation site is built by glutamate 185, histidine 226, histidine 277, and aspartate 327.

Belongs to the metallo-dependent hydrolases superfamily. TatD-type hydrolase family. Requires Mg(2+) as cofactor.

It localises to the cytoplasm. Has both endo- and exonuclease activities. Incises double-stranded DNA without obvious specificity via its endonuclease activity and excises the DNA from the 3'-to 5'-end by its exonuclease activity. May have a role in apoptosis. This is Deoxyribonuclease Tat-D from Saccharomyces cerevisiae (strain ATCC 204508 / S288c) (Baker's yeast).